The sequence spans 504 residues: Cytochrome P450 2S1 (504 aa).

A heme-binding site is contributed by Cys440.

This sequence belongs to the cytochrome P450 family. It depends on heme as a cofactor. Expressed at higher levels in extrahepatic tissues including trachea, lung, stomach, small intestine, colon, kidney, breast, placenta and spleen. Expressed in peripheral blood leukocytes. Constitutively expressed in skin (at protein level).

The protein resides in the endoplasmic reticulum membrane. The protein localises to the microsome membrane. The catalysed reaction is all-trans-retinoate + reduced [NADPH--hemoprotein reductase] + O2 = all-trans-5,6-epoxyretinoate + oxidized [NADPH--hemoprotein reductase] + H2O + H(+). The enzyme catalyses all-trans-retinoate + reduced [NADPH--hemoprotein reductase] + O2 = all-trans-4-hydroxyretinoate + oxidized [NADPH--hemoprotein reductase] + H2O + H(+). It carries out the reaction (5S)-hydroperoxy-(6E,8Z,11Z,14Z)-eicosatetraenoate = 5-oxo-(6E,8Z,11Z,14Z)-eicosatetraenoate + H2O. It catalyses the reaction (12S)-hydroperoxy-(5Z,8Z,10E,14Z)-eicosatetraenoate = 12-oxo-(5Z,8Z,10E,14Z)-eicosatetraenoate + H2O. The catalysed reaction is (15S)-hydroperoxy-(5Z,8Z,11Z,13E)-eicosatetraenoate = 15-oxo-(5Z,8Z,11Z,13E)-eicosatetraenoate + H2O. The enzyme catalyses prostaglandin H2 = thromboxane A2. It carries out the reaction prostaglandin H2 = (12S)-hydroxy-(5Z,8E,10E)-heptadecatrienoate + malonaldehyde. It catalyses the reaction (13S)-hydroperoxy-(9Z,11E)-octadecadienoate = 13-oxo-(9Z,11E)-octadecadienoate + H2O. It participates in lipid metabolism; fatty acid metabolism. A cytochrome P450 monooxygenase involved in the metabolism of retinoids and eicosanoids. In epidermis, may contribute to the oxidative metabolism of all-trans-retinoic acid. For this activity, uses molecular oxygen inserting one oxygen atom into a substrate, and reducing the second into a water molecule, with two electrons provided by NADPH via cytochrome P450 reductase (NADPH--hemoprotein reductase). Additionally, displays peroxidase and isomerase activities toward various oxygenated eicosanoids such as prostaglandin H2 (PGH2) and hydroperoxyeicosatetraenoates (HPETEs). Independently of cytochrome P450 reductase, NADPH, and O2, catalyzes the breakdown of PGH2 to hydroxyheptadecatrienoic acid (HHT) and malondialdehyde (MDA), which is known to act as a mediator of DNA damage. This is Cytochrome P450 2S1 from Homo sapiens (Human).